Reading from the N-terminus, the 198-residue chain is Recombination protein RecR (198 aa).

Residues 57 to 72 (CSICGNLTDQDPCAIC) form a C4-type zinc finger. A Toprim domain is found at 80 to 175 (STILIVEDSR…KVTRLARGLA (96 aa)).

Belongs to the RecR family.

May play a role in DNA repair. It seems to be involved in an RecBC-independent recombinational process of DNA repair. It may act with RecF and RecO. The sequence is that of Recombination protein RecR from Streptococcus suis (strain 05ZYH33).